The primary structure comprises 195 residues: Obelin (195 aa).

A propeptide spanning residues 1–6 (MSSKYA) is cleaved from the precursor. 4 EF-hand domains span residues 17–52 (RWIK…DICA), 53–88 (KLEA…FPQF), 110–145 (LIRE…SGIS), and 146–181 (PSQE…FWYT). Ca(2+) is bound by residues Asp-30, Asn-32, Asn-34, Lys-36, and Glu-41. Ca(2+)-binding residues include Asp-123, Asp-125, Ser-127, Thr-129, Glu-134, Asp-159, Asp-161, Ser-163, Asp-165, and Glu-170.

It belongs to the aequorin family.

Functionally, ca(2+)-dependent bioluminescence photoprotein. Displays an emission peak at 470 nm (blue light). Trace amounts of calcium ion trigger the intramolecular oxidation of the chromophore, coelenterazine into coelenteramide and CO(2) with the concomitant emission of light. This is Obelin from Obelia longissima (Black sea hydrozoan).